The sequence spans 599 residues: UvrABC system protein C (599 aa).

The 79-residue stretch at 15-93 (DNPGVYQYYD…IKTLQPRYNI (79 aa)) folds into the GIY-YIG domain. The 36-residue stretch at 207–242 (KDSMKDFKKVMTNLAQNMHFEEAQKIKEKIEILENY) folds into the UVR domain.

The protein belongs to the UvrC family. In terms of assembly, interacts with UvrB in an incision complex.

The protein resides in the cytoplasm. In terms of biological role, the UvrABC repair system catalyzes the recognition and processing of DNA lesions. UvrC both incises the 5' and 3' sides of the lesion. The N-terminal half is responsible for the 3' incision and the C-terminal half is responsible for the 5' incision. This is UvrABC system protein C from Flavobacterium psychrophilum (strain ATCC 49511 / DSM 21280 / CIP 103535 / JIP02/86).